A 92-amino-acid polypeptide reads, in one-letter code: Co-chaperonin GroES (92 aa).

This sequence belongs to the GroES chaperonin family. Heptamer of 7 subunits arranged in a ring. Interacts with the chaperonin GroEL.

It localises to the cytoplasm. In terms of biological role, together with the chaperonin GroEL, plays an essential role in assisting protein folding. The GroEL-GroES system forms a nano-cage that allows encapsulation of the non-native substrate proteins and provides a physical environment optimized to promote and accelerate protein folding. GroES binds to the apical surface of the GroEL ring, thereby capping the opening of the GroEL channel. In Thermotoga petrophila (strain ATCC BAA-488 / DSM 13995 / JCM 10881 / RKU-1), this protein is Co-chaperonin GroES.